A 458-amino-acid chain; its full sequence is Exodeoxyribonuclease 7 large subunit (458 aa).

Belongs to the XseA family. In terms of assembly, heterooligomer composed of large and small subunits.

It is found in the cytoplasm. The catalysed reaction is Exonucleolytic cleavage in either 5'- to 3'- or 3'- to 5'-direction to yield nucleoside 5'-phosphates.. Bidirectionally degrades single-stranded DNA into large acid-insoluble oligonucleotides, which are then degraded further into small acid-soluble oligonucleotides. In Serratia proteamaculans (strain 568), this protein is Exodeoxyribonuclease 7 large subunit.